We begin with the raw amino-acid sequence, 447 residues long: 1-aminocyclopropane-1-carboxylate synthase 7 (447 aa).

Glu61 and Tyr100 together coordinate substrate. The residue at position 285 (Lys285) is an N6-(pyridoxal phosphate)lysine.

It belongs to the class-I pyridoxal-phosphate-dependent aminotransferase family. In terms of assembly, homodimer and heterodimer. In vivo, the relevance of heterodimerization with other ACS enzymes is however unsure. Interacts with XBAT32. Pyridoxal 5'-phosphate serves as cofactor. In terms of processing, ubiquitinated by XBAT32. Ubiquitination probably leads to its subsequent degradation, thus controlling ethylene production. Expressed in roots.

The enzyme catalyses S-adenosyl-L-methionine = 1-aminocyclopropane-1-carboxylate + S-methyl-5'-thioadenosine + H(+). The protein operates within alkene biosynthesis; ethylene biosynthesis via S-adenosyl-L-methionine; ethylene from S-adenosyl-L-methionine: step 1/2. In terms of biological role, 1-aminocyclopropane-1-carboxylate synthase (ACS) enzymes catalyze the conversion of S-adenosyl-L-methionine (SAM) into 1-aminocyclopropane-1-carboxylate (ACC), a direct precursor of ethylene. The polypeptide is 1-aminocyclopropane-1-carboxylate synthase 7 (ACS7) (Arabidopsis thaliana (Mouse-ear cress)).